The sequence spans 250 residues: Cell division protein ZapD (250 aa).

It belongs to the ZapD family. As to quaternary structure, interacts with FtsZ.

The protein resides in the cytoplasm. In terms of biological role, cell division factor that enhances FtsZ-ring assembly. Directly interacts with FtsZ and promotes bundling of FtsZ protofilaments, with a reduction in FtsZ GTPase activity. The sequence is that of Cell division protein ZapD from Bordetella petrii (strain ATCC BAA-461 / DSM 12804 / CCUG 43448).